The following is a 119-amino-acid chain: FAD-linked sulfhydryl oxidase (119 aa).

Residues 1-97 form the ERV/ALR sulfhydryl oxidase domain; that stretch reads MLHWGPKFWR…ISWSEYKNIY (97 aa). A disulfide bridge links Cys-44 with Cys-47.

This sequence belongs to the asfivirus B119L family. Interacts with A151R. It depends on FAD as a cofactor.

It localises to the host cytoplasm. The protein localises to the virion. It carries out the reaction 2 R'C(R)SH + O2 = R'C(R)S-S(R)CR' + H2O2. Its function is as follows. FAD-dependent sulfhydryl oxidase that catalyzes the formation of disulfide bonds in viral proteins produced in the cell cytoplasm. This is FAD-linked sulfhydryl oxidase from Ornithodoros (relapsing fever ticks).